Reading from the N-terminus, the 147-residue chain is Hemoglobin subunit beta-1 (147 aa).

The 145-residue stretch at His3–His147 folds into the Globin domain. Residues His64 and His93 each coordinate heme b.

Belongs to the globin family. As to quaternary structure, hb1 is a heterotetramer of two alpha-1 chains and two beta-1 chains. As to expression, red blood cells.

Involved in oxygen transport from gills to the various peripheral tissues. In Liparis tunicatus (Kelp snailfish), this protein is Hemoglobin subunit beta-1.